Reading from the N-terminus, the 510-residue chain is 2,3-bisphosphoglycerate-independent phosphoglycerate mutase (510 aa).

Mn(2+)-binding residues include D14 and S64. Residue S64 is the Phosphoserine intermediate of the active site. Residues H125, 155-156, R187, R193, 259-262, and K332 each bind substrate; these read RD and RADR. Mn(2+) contacts are provided by D399, H403, D440, H441, and H459.

This sequence belongs to the BPG-independent phosphoglycerate mutase family. As to quaternary structure, monomer. Mn(2+) is required as a cofactor.

It catalyses the reaction (2R)-2-phosphoglycerate = (2R)-3-phosphoglycerate. It functions in the pathway carbohydrate degradation; glycolysis; pyruvate from D-glyceraldehyde 3-phosphate: step 3/5. Its function is as follows. Catalyzes the interconversion of 2-phosphoglycerate and 3-phosphoglycerate. This Ectopseudomonas mendocina (strain ymp) (Pseudomonas mendocina) protein is 2,3-bisphosphoglycerate-independent phosphoglycerate mutase.